The following is a 310-amino-acid chain: Aspartate carbamoyltransferase catalytic subunit (310 aa).

The carbamoyl phosphate site is built by arginine 59 and threonine 60. Lysine 87 is a binding site for L-aspartate. Arginine 109, histidine 139, and glutamine 142 together coordinate carbamoyl phosphate. Arginine 172 and arginine 224 together coordinate L-aspartate. Residues alanine 265 and proline 266 each coordinate carbamoyl phosphate.

It belongs to the aspartate/ornithine carbamoyltransferase superfamily. ATCase family. As to quaternary structure, heterododecamer (2C3:3R2) of six catalytic PyrB chains organized as two trimers (C3), and six regulatory PyrI chains organized as three dimers (R2).

The catalysed reaction is carbamoyl phosphate + L-aspartate = N-carbamoyl-L-aspartate + phosphate + H(+). Its pathway is pyrimidine metabolism; UMP biosynthesis via de novo pathway; (S)-dihydroorotate from bicarbonate: step 2/3. Its function is as follows. Catalyzes the condensation of carbamoyl phosphate and aspartate to form carbamoyl aspartate and inorganic phosphate, the committed step in the de novo pyrimidine nucleotide biosynthesis pathway. This chain is Aspartate carbamoyltransferase catalytic subunit, found in Lactococcus lactis subsp. cremoris (strain MG1363).